A 480-amino-acid polypeptide reads, in one-letter code: Lysostaphin (480 aa).

Positions 1–23 (MKKTKNNYYTTPLAIGLSTFALA) are cleaved as a signal peptide. A propeptide spanning residues 24–234 (SIVYGGIQNE…ALVQNRTALR (211 aa)) is cleaved from the precursor. Repeat copies occupy residues 49–61 (AEVETSKPPVENT), 62–74 (AEVETSKAPVENT), 75–87 (AEVETSKAPVENT), 88–100 (AEVETSKAPVENT), 101–113 (AEVETSKAPVENT), 114–126 (AEVETSKAPVENT), 127–139 (AEVETSKAPVENT), 140–152 (AEVETSKAPVENT), 153–165 (AEVETSKAPVENT), 166–178 (AEVETSKAPVENT), 179–191 (AEVETSKAPVENT), 192–204 (AEVETSKAPVENT), and 205–217 (AEVETSKAPVENT). Residues 49–230 (AEVETSKPPV…ETSKALVQNR (182 aa)) form a 14 X 13 AA tandem repeats of A-E-V-E-T-S-K-[AP]-P-V-E-N-T region. Residues 51-219 (VETSKPPVEN…SKAPVENTAE (169 aa)) form a disordered region. Residues 218–230 (AEVETSKALVQNR) form a 14; approximate repeat. Zn(2+)-binding residues include histidine 266 and aspartate 270. Histidine 347 is a catalytic residue. Histidine 349 contributes to the Zn(2+) binding site. Residues 400–468 (SESASFTPNT…YLPVRTWNKS (69 aa)) form the SH3b domain.

This sequence belongs to the peptidase M23B family. Monomer. Zn(2+) serves as cofactor.

The protein resides in the secreted. It carries out the reaction Hydrolysis of the -Gly-|-Gly- bond in the pentaglycine inter-peptide link joining staphylococcal cell wall peptidoglycans.. Lyses staphylococcal cells by hydrolyzing the polyglycine interpeptide bridges of the peptidoglycan. In Staphylococcus staphylolyticus, this protein is Lysostaphin (lss).